The primary structure comprises 90 residues: Probable Fe(2+)-trafficking protein (90 aa).

This sequence belongs to the Fe(2+)-trafficking protein family.

In terms of biological role, could be a mediator in iron transactions between iron acquisition and iron-requiring processes, such as synthesis and/or repair of Fe-S clusters in biosynthetic enzymes. This Cupriavidus pinatubonensis (strain JMP 134 / LMG 1197) (Cupriavidus necator (strain JMP 134)) protein is Probable Fe(2+)-trafficking protein.